The primary structure comprises 295 residues: Pyridoxal 5'-phosphate synthase subunit PdxS (295 aa).

D25 provides a ligand contact to D-ribose 5-phosphate. K82 functions as the Schiff-base intermediate with D-ribose 5-phosphate in the catalytic mechanism. G154 is a D-ribose 5-phosphate binding site. R166 is a binding site for D-glyceraldehyde 3-phosphate. D-ribose 5-phosphate-binding positions include G215 and G236 to S237.

Belongs to the PdxS/SNZ family. As to quaternary structure, in the presence of PdxT, forms a dodecamer of heterodimers.

It catalyses the reaction aldehydo-D-ribose 5-phosphate + D-glyceraldehyde 3-phosphate + L-glutamine = pyridoxal 5'-phosphate + L-glutamate + phosphate + 3 H2O + H(+). The protein operates within cofactor biosynthesis; pyridoxal 5'-phosphate biosynthesis. Functionally, catalyzes the formation of pyridoxal 5'-phosphate from ribose 5-phosphate (RBP), glyceraldehyde 3-phosphate (G3P) and ammonia. The ammonia is provided by the PdxT subunit. Can also use ribulose 5-phosphate and dihydroxyacetone phosphate as substrates, resulting from enzyme-catalyzed isomerization of RBP and G3P, respectively. The protein is Pyridoxal 5'-phosphate synthase subunit PdxS of Actinobacillus pleuropneumoniae serotype 7 (strain AP76).